A 524-amino-acid polypeptide reads, in one-letter code: Rho guanine nucleotide exchange factor 3 (524 aa).

Positions 75–98 (SDSRPDLFSPRPWSRNTPAANTKR) are disordered. The region spanning 121-303 (IKRQEAIFEL…IQGIVAEINI (183 aa)) is the DH domain. The region spanning 290–448 (AINIIQGIVA…QWLNCIRQAK (159 aa)) is the PH domain.

The protein resides in the cytoplasm. Acts as a guanine nucleotide exchange factor (GEF) for RhoA and RhoB GTPases. The protein is Rho guanine nucleotide exchange factor 3 (Arhgef3) of Gallus gallus (Chicken).